The chain runs to 559 residues: MGGNKQRWFSFHQRSSSATTTTLPQHKHDETPPEFLCPITGFLMSDPVVVSSGQTFERLSVQVCRNLGYIPDLLDGTRPDLSTVIPNLAMKSTIFSWCDRQKVDHPRPPDAAYVEGVVRARMDKDPNPSPGQSPGPGDKDPEPEILPPVEENSPSDYDAVMEAIRARSKNSMSPTTSLESVTIGQSSYHPVRAVSMFSSSTTSSSSGVFAGADSPFRNAMSFSSTDHSSSPMSPEEEEIFNKLRGTDIFDHEQGLILLRKMTRSSEDLRVSLCTDRILSFLRSLLVSRYNLVQTNAAASVVNLSLEKQNKVKIVRSGFVPLLIDVLKSGTTEAQEHVAGALFSLALEDENKMVIGVLGAVEPLLHALRSSESERARQDAALALYHLSLIPSNRTRLVRAGAVPTLLSMVRSGDSTSRILLVLCNLAACPDGKGAMLDGNAVAILVGKLREVGGGDSEAARENCVAVLLTLCQGNLRFRGLASEAGAEEVLMEVEENGNERVKEKASKILLAMRGGGGGESEFGENAEAREWNRMLEATGLSRTQFQGGQNGGFAYSSQF.

2 disordered regions span residues 1–30 and 121–156; these read MGGN…KHDE and RMDK…SPSD. The segment covering 12 to 24 has biased composition (polar residues); it reads HQRSSSATTTTLP. The U-box domain maps to 30–104; sequence ETPPEFLCPI…FSWCDRQKVD (75 aa). ARM repeat units lie at residues 266 to 305, 307 to 346, 348 to 388, 390 to 427, and 428 to 472; these read EDLR…NLSL, KQNK…SLAL, DENK…HLSL, PSNR…NLAA, and CPDG…TLCQ.

It carries out the reaction S-ubiquitinyl-[E2 ubiquitin-conjugating enzyme]-L-cysteine + [acceptor protein]-L-lysine = [E2 ubiquitin-conjugating enzyme]-L-cysteine + N(6)-ubiquitinyl-[acceptor protein]-L-lysine.. Its pathway is protein modification; protein ubiquitination. Its function is as follows. Functions as an E3 ubiquitin ligase. This Arabidopsis thaliana (Mouse-ear cress) protein is U-box domain-containing protein 41 (PUB41).